The following is a 158-amino-acid chain: Protein EOLA1 (158 aa).

Residues 6–92 enclose the ASCH domain; that stretch reads LSFRQPYAGF…IAGLVDIGET (87 aa).

It belongs to the EOLA family. In terms of assembly, interacts with MT2A. Expressed primarily in heart, skeletal muscle, kidney, liver and placenta. Relatively high level of expression in spleen, colon and small intestine. Almost no expression in brain, thymus, lung and peripheral blood leukocytes. Expressed in epithelial cells (at protein level).

Functionally, may play a role in cell protection during the inflammatory response. In epithelial cells, negatively regulates IL6 production and apoptosis through the regulation of MT2A expression. This Homo sapiens (Human) protein is Protein EOLA1.